The chain runs to 549 residues: 4-hydroxybutyrate--CoA ligase 2 (549 aa).

Residues 195–203 (TSGTTGLPK), 336–341 (ETYGPH), D425, and R440 contribute to the ATP site. Residues 448 to 450 (GGE), K506, and 514 to 516 (CPK) contribute to the CoA site. K530 is an ATP binding site.

It belongs to the ATP-dependent AMP-binding enzyme family. It depends on Mg(2+) as a cofactor. Requires Mn(2+) as cofactor.

The catalysed reaction is 4-hydroxybutanoate + ATP + CoA = 4-hydroxybutanoyl-CoA + AMP + diphosphate. It catalyses the reaction acetate + ATP + CoA = acetyl-CoA + AMP + diphosphate. It carries out the reaction propanoate + ATP + CoA = propanoyl-CoA + AMP + diphosphate. The enzyme catalyses a medium-chain fatty acid + ATP + CoA = a medium-chain fatty acyl-CoA + AMP + diphosphate. In terms of biological role, catalyzes the ligation of coenzyme A (CoA) to 4-hydroxybutyrate (4HB). It can also use butyrate, valerate, propionate, acetate and 3-hydroxybutyrate (3HB) as substrates. The chain is 4-hydroxybutyrate--CoA ligase 2 from Metallosphaera sedula (strain ATCC 51363 / DSM 5348 / JCM 9185 / NBRC 15509 / TH2).